The sequence spans 181 residues: UPF0302 protein LMOf2365_1950 (181 aa).

Belongs to the UPF0302 family.

The sequence is that of UPF0302 protein LMOf2365_1950 from Listeria monocytogenes serotype 4b (strain F2365).